Here is a 141-residue protein sequence, read N- to C-terminus: Hemoglobin subunit alpha-D (141 aa).

Residues 1 to 141 (MLTADDKKLL…VAAVLAEKYR (141 aa)) enclose the Globin domain. Heme b contacts are provided by H58 and H87.

It belongs to the globin family. Heterotetramer of two alpha-D chains and two beta chains. In terms of tissue distribution, red blood cells.

Its function is as follows. Involved in oxygen transport from the lung to the various peripheral tissues. This Anser anser anser (Western greylag goose) protein is Hemoglobin subunit alpha-D (HBAD).